A 273-amino-acid chain; its full sequence is WIMGHMVNAIAQIDEFVNLGANSIETDVSFDKNANPEYTYHGIPCDCGRTCTKSEKFNVFLQGLQKATTPGDSKYQEKLVLVVFDLKSSSLYDNQASDAGKKLAKSLLQNYWKNGNNGGRAYIVLSIPNLAHYKLITGFKETLKTEGHPELMEKVGYDFSGNDDIDQVAKAYKKAGVTGHVWQSDGITNCLPRGLDRVRQAVANRDSSNGFINKVYYWTVDKRSTTRGALDAGVDGIMTNYPDVIAVVLSESAYKSKFRIATYEDNPWETFKN.

His-5 is an active-site residue. Residues Glu-25 and Asp-27 each contribute to the Mg(2+) site. Residue His-41 is the Nucleophile of the active site. Intrachain disulfides connect Cys-45-Cys-51 and Cys-47-Cys-190. Residue Asp-85 participates in Mg(2+) binding.

The protein belongs to the arthropod phospholipase D family. Class II subfamily. Mg(2+) serves as cofactor. In terms of tissue distribution, expressed by the venom gland.

Its subcellular location is the secreted. The catalysed reaction is an N-(acyl)-sphingosylphosphocholine = an N-(acyl)-sphingosyl-1,3-cyclic phosphate + choline. It carries out the reaction an N-(acyl)-sphingosylphosphoethanolamine = an N-(acyl)-sphingosyl-1,3-cyclic phosphate + ethanolamine. It catalyses the reaction a 1-acyl-sn-glycero-3-phosphocholine = a 1-acyl-sn-glycero-2,3-cyclic phosphate + choline. The enzyme catalyses a 1-acyl-sn-glycero-3-phosphoethanolamine = a 1-acyl-sn-glycero-2,3-cyclic phosphate + ethanolamine. Functionally, dermonecrotic toxins cleave the phosphodiester linkage between the phosphate and headgroup of certain phospholipids (sphingolipid and lysolipid substrates), forming an alcohol (often choline) and a cyclic phosphate. This toxin acts on sphingomyelin (SM). It may also act on ceramide phosphoethanolamine (CPE), lysophosphatidylcholine (LPC) and lysophosphatidylethanolamine (LPE), but not on lysophosphatidylserine (LPS), and lysophosphatidylglycerol (LPG). It acts by transphosphatidylation, releasing exclusively cyclic phosphate products as second products. Induces dermonecrosis, hemolysis, increased vascular permeability, edema, inflammatory response, and platelet aggregation. The polypeptide is Dermonecrotic toxin LdSicTox-alphaIB3ai (Loxosceles deserta (Desert recluse spider)).